Reading from the N-terminus, the 656-residue chain is DNA topoisomerase 3 (656 aa).

The Toprim domain occupies 2–156 (KVLCVAEKNS…QVYRAVFSHL (155 aa)). One can recognise a Topo IA-type catalytic domain in the interval 172–635 (DMKSVHAVGT…DIVEKYRKYW (464 aa)). The active-site O-(5'-phospho-DNA)-tyrosine intermediate is Y356.

The protein belongs to the type IA topoisomerase family. In terms of assembly, forms a complex with SGS1 and RMI1. Interacts with SGS1.

It catalyses the reaction ATP-independent breakage of single-stranded DNA, followed by passage and rejoining.. Releases the supercoiling and torsional tension of DNA introduced during the DNA replication and transcription by transiently cleaving and rejoining one strand of the DNA duplex. Introduces a single-strand break via transesterification at a target site in duplex DNA. The scissile phosphodiester is attacked by the catalytic tyrosine of the enzyme, resulting in the formation of a DNA-(5'-phosphotyrosyl)-enzyme intermediate and the expulsion of a 3'-OH DNA strand. The free DNA strand than undergoes passage around the unbroken strand thus removing DNA supercoils. Finally, in the religation step, the DNA 3'-OH attacks the covalent intermediate to expel the active-site tyrosine and restore the DNA phosphodiester backbone. Essential for proper chromosome segregation in both meiosis and mitosis. Weakly relaxes negative supercoils and displays a distinct preference for binding single-stranded DNA. The TOP3-SGS1 protein complex may function as a eukaryotic reverse gyrase introducing positive supercoils into extrachromosomal ribosomal DNA rings. The protein is DNA topoisomerase 3 (TOP3) of Saccharomyces cerevisiae (strain ATCC 204508 / S288c) (Baker's yeast).